The sequence spans 392 residues: Protein O-glucosyltransferase 1 (392 aa).

A signal peptide spans 1–23 (MEWWASSPLRLWLLLFLLPSAQG). N-linked (GlcNAc...) asparagine glycans are attached at residues Asn40 and Asn53. 4 cysteine pairs are disulfide-bonded: Cys49/Cys56, Cys54/Cys357, Cys102/Cys108, and Cys263/Cys286. The segment at 103–107 (MFPSR) is interaction with the consensus sequence C-X-S-X-[PA]-C in peptide substrates. The active-site Proton donor/acceptor is Asp133. An interaction with the consensus sequence C-X-S-X-[PA]-C in peptide substrates region spans residues 172-178 (AVWPIYP). Tyr177 provides a ligand contact to UDP-alpha-D-glucose. A glycan (N-linked (GlcNAc...) asparagine) is linked at Asn204. Residues Ser212, Arg218, and 274 to 279 (VAASFR) each bind UDP-alpha-D-glucose. Asn373 is a glycosylation site (N-linked (GlcNAc...) asparagine). Positions 389-392 (KTEL) match the Prevents secretion from ER motif.

Belongs to the glycosyltransferase 90 family. In terms of tissue distribution, expressed in most adult tissues at different intensities. Abundantly expressed in liver. Expressed also in brain, heart, skeletal muscle, spleen, kidney, placenta, lung and peripheral blood leukocyte. Not detectable in colon, thymus and small intestine. Expressed in the epidermis, especially in the upper parts, stratum spinosum and stratum granulosum (at protein level).

It is found in the endoplasmic reticulum lumen. The enzyme catalyses L-seryl-[EGF-like domain protein] + UDP-alpha-D-xylose = 3-O-(beta-D-xylosyl)-L-seryl-[EGF-like domain protein] + UDP + H(+). It carries out the reaction L-seryl-[EGF-like domain protein] + UDP-alpha-D-glucose = 3-O-(beta-D-glucosyl)-L-seryl-[EGF-like domain protein] + UDP + H(+). It functions in the pathway protein modification; protein glycosylation. Dual specificity glycosyltransferase that catalyzes the transfer of glucose and xylose from UDP-glucose and UDP-xylose, respectively, to a serine residue found in the consensus sequence of C-X-S-X-P-C. Specifically targets extracellular EGF repeats of protein such as CRB2, F7, F9 and NOTCH2. Acts as a positive regulator of Notch signaling by mediating O-glucosylation of Notch, leading to regulate muscle development. Notch glucosylation does not affect Notch ligand binding. Required during early development to promote gastrulation: acts by mediating O-glucosylation of CRB2, which is required for CRB2 localization to the cell membrane. This Homo sapiens (Human) protein is Protein O-glucosyltransferase 1.